A 490-amino-acid polypeptide reads, in one-letter code: UDP-N-acetylmuramoylalanine--D-glutamate ligase (490 aa).

124–130 (GTNGKTT) serves as a coordination point for ATP.

The protein belongs to the MurCDEF family.

It localises to the cytoplasm. The enzyme catalyses UDP-N-acetyl-alpha-D-muramoyl-L-alanine + D-glutamate + ATP = UDP-N-acetyl-alpha-D-muramoyl-L-alanyl-D-glutamate + ADP + phosphate + H(+). It functions in the pathway cell wall biogenesis; peptidoglycan biosynthesis. Functionally, cell wall formation. Catalyzes the addition of glutamate to the nucleotide precursor UDP-N-acetylmuramoyl-L-alanine (UMA). In Mycobacterium leprae (strain TN), this protein is UDP-N-acetylmuramoylalanine--D-glutamate ligase (murD).